Consider the following 310-residue polypeptide: Transcriptional activator BRRF1 (310 aa).

This sequence belongs to the lymphocryptovirus BBRF1 family.

Enhances the ability of BRLF1 to induce lytic infection by cooperating with it to transcriptionally activate the BZLF1 promoter. This chain is Transcriptional activator BRRF1, found in Epstein-Barr virus (strain AG876) (HHV-4).